Consider the following 252-residue polypeptide: Cell division protein ZapD (252 aa).

Belongs to the ZapD family. As to quaternary structure, interacts with FtsZ.

It localises to the cytoplasm. Functionally, cell division factor that enhances FtsZ-ring assembly. Directly interacts with FtsZ and promotes bundling of FtsZ protofilaments, with a reduction in FtsZ GTPase activity. In Cupriavidus necator (strain ATCC 17699 / DSM 428 / KCTC 22496 / NCIMB 10442 / H16 / Stanier 337) (Ralstonia eutropha), this protein is Cell division protein ZapD.